A 554-amino-acid chain; its full sequence is CTP synthase (554 aa).

The tract at residues 1–279 (MSQPRAEHVT…DAFLIRRLDL (279 aa)) is amidoligase domain. Residue S21 participates in CTP binding. S21 contacts UTP. ATP is bound by residues 22–27 (SLGKGL) and D79. Mg(2+) contacts are provided by D79 and E153. Residues 160-162 (DIE), 200-205 (KTKPTQ), and K236 contribute to the CTP site. Residues 200–205 (KTKPTQ) and K236 contribute to the UTP site. One can recognise a Glutamine amidotransferase type-1 domain in the interval 304–551 (TVALVGKYID…VKAGLKHKND (248 aa)). G367 provides a ligand contact to L-glutamine. The Nucleophile; for glutamine hydrolysis role is filled by C394. Residues 395-398 (LGLQ), E417, and R478 each bind L-glutamine. Active-site residues include H524 and E526.

The protein belongs to the CTP synthase family. As to quaternary structure, homotetramer.

The catalysed reaction is UTP + L-glutamine + ATP + H2O = CTP + L-glutamate + ADP + phosphate + 2 H(+). It carries out the reaction L-glutamine + H2O = L-glutamate + NH4(+). The enzyme catalyses UTP + NH4(+) + ATP = CTP + ADP + phosphate + 2 H(+). It functions in the pathway pyrimidine metabolism; CTP biosynthesis via de novo pathway; CTP from UDP: step 2/2. With respect to regulation, allosterically activated by GTP, when glutamine is the substrate; GTP has no effect on the reaction when ammonia is the substrate. The allosteric effector GTP functions by stabilizing the protein conformation that binds the tetrahedral intermediate(s) formed during glutamine hydrolysis. Inhibited by the product CTP, via allosteric rather than competitive inhibition. Functionally, catalyzes the ATP-dependent amination of UTP to CTP with either L-glutamine or ammonia as the source of nitrogen. Regulates intracellular CTP levels through interactions with the four ribonucleotide triphosphates. This chain is CTP synthase, found in Corynebacterium kroppenstedtii (strain DSM 44385 / JCM 11950 / CIP 105744 / CCUG 35717).